The primary structure comprises 952 residues: MSWLHKFFDLFLGESEEDAERETKPAQIPQQQEVHHPEGQLKRLEDPKIYYEYPKGKFRFPVVPDGYKNHDLRRRRTPSDEPKSAPRPSAAPYRERPRNEEEQHTYQAAEPAKKPFKPTNIPSPVYGFNQKPSVKKDVPKKPSETLNEPDKSVKEKVTLLSEEIERERGYPASDTQAHSKIESPFFPDTQFEKQPSGVLNRKDTEHDEALAKRPAEPSGNKVPFESGVQQPEKEEPFFPAEQAEEQTPPEMLTDTAAEGLSDSEVGREEPATAEEEQREQQPEKFEEPVFSAELDEEQTAPESQTEAVSEDEKAKEPSDSPVYNHHENAAEGAESPFVQEEQMDIRQEEPLFTDHEYSSEALAQAETVAKESEEPSESIINNHYDTLGEAQETKIDVQPDSHTELEKTEHMEQGSKSSTATLENRQEIRADKPREASEEPKKRPGVQEKRTEQSASSQKGPSVPFNVMMLKRDTHKQQKAEERRGSYVFPNVALLDVPPAQVQDDTAWIEEQRQLLDLTLKNFNVRANVVHVTQGPSVTRFEVHPEPGVKVNKITNLSDDIKLSLSAKDIRIEAPIPGKNTIGIEVPNRTSKVVDLRQMIRSSAFRTSKSPLTAALGLDISGNPVVIDLKKMPHGLIAGATGSGKSVCINTILVSLLYKADPSEVKVLLIDPKMVELAPYNKIPHLVSPVITDAKAATAALKWVVEEMERRYELFAHSGVRDIDRFNQLTAEHQMGEKLPYLVVIIDELADLMMVAPNDVEESIARIAQKARACGIHLLVATQRPSVDVITGLIKANIPTRIAFSVSSQVDSRTIIDIAGAEKLLGKGDMLFLENGSGKPVRLQGNFVSDREIDRVVSHVRSQMPPTYLFEQEELVRQGSALKEEDELFYEACEFVVEQNSASTSSLQRRFRIGYNRAARLIDMMEAEGMISEAKGSKPREVLITASDLINE.

Residues 15 to 468 (SEEDAERETK…KGPSVPFNVM (454 aa)) are disordered. Composition is skewed to basic and acidic residues over residues 33 to 49 (EVHH…DPKI), 93 to 104 (YRERPRNEEEQH), 134 to 169 (VKKD…RERG), and 200 to 215 (NRKD…KRPA). Low complexity predominate over residues 237–250 (FFPAEQAEEQTPPE). Composition is skewed to basic and acidic residues over residues 278–287 (REQQPEKFEE), 310–329 (EDEK…HENA), 343–358 (MDIR…HEYS), and 391–413 (QETK…HMEQ). Polar residues predominate over residues 414 to 423 (GSKSSTATLE). The segment covering 424 to 452 (NRQEIRADKPREASEEPKKRPGVQEKRTE) has biased composition (basic and acidic residues). A FtsK domain is found at 622 to 813 (GNPVVIDLKK…FSVSSQVDSR (192 aa)). 639 to 646 (GATGSGKS) lines the ATP pocket.

Belongs to the FtsK/SpoIIIE/SftA family. Homohexamer.

The protein resides in the cytoplasm. Functionally, required for the accurate completion of chromosome partitioning, in part by promoting efficient resolution of chromosome dimers, before the formation of the division septum. Binds to DNA in a non-specific manner. Shows ATPase activity. Not required for cytokinesis. This is DNA translocase SftA (sftA) from Bacillus subtilis (strain 168).